We begin with the raw amino-acid sequence, 285 residues long: 3-methyl-2-oxobutanoate hydroxymethyltransferase (285 aa).

The tract at residues Met1–Thr23 is disordered. The segment covering Ala9–Pro21 has biased composition (low complexity). 2 residues coordinate Mg(2+): Asp66 and Asp105. Residues Asp66–Ser67, Asp105, and Lys135 each bind 3-methyl-2-oxobutanoate. Glu137 contacts Mg(2+). Glu203 serves as the catalytic Proton acceptor.

Belongs to the PanB family. As to quaternary structure, homodecamer; pentamer of dimers. The cofactor is Mg(2+).

It localises to the cytoplasm. The enzyme catalyses 3-methyl-2-oxobutanoate + (6R)-5,10-methylene-5,6,7,8-tetrahydrofolate + H2O = 2-dehydropantoate + (6S)-5,6,7,8-tetrahydrofolate. It functions in the pathway cofactor biosynthesis; (R)-pantothenate biosynthesis; (R)-pantoate from 3-methyl-2-oxobutanoate: step 1/2. In terms of biological role, catalyzes the reversible reaction in which hydroxymethyl group from 5,10-methylenetetrahydrofolate is transferred onto alpha-ketoisovalerate to form ketopantoate. This is 3-methyl-2-oxobutanoate hydroxymethyltransferase from Mycobacterium avium (strain 104).